The following is a 939-amino-acid chain: AP-2 complex subunit alpha-2 (939 aa).

A 1,2-diacyl-sn-glycero-3-phospho-(1D-myo-inositol-3,4,5-trisphosphate) contacts are provided by residues 11–12, Lys43, Tyr53, and 57–61; these read RG and KYVCK. The interval 612–681 is disordered; it reads LAKLKKKKGP…AGPPPSSGGS (70 aa). Residues 646–667 are compositionally biased toward low complexity; sequence PASTSAVSTPSPSADLLGLGAA. The span at 668–677 shows a compositional bias: pro residues; the sequence is PPAPAGPPPS.

The protein belongs to the adaptor complexes large subunit family. As to quaternary structure, adaptor protein complex 2 (AP-2) is a heterotetramer composed of two large adaptins (alpha-type subunit AP2A1 or AP2A2 and beta-type subunit AP2B1), a medium adaptin (mu-type subunit AP2M1) and a small adaptin (sigma-type subunit AP2S1). Binds EPN1, EPS15, AMPH, SNAP91 and BIN1. Interacts with HIP1. Interacts with DGKD. Interacts with DENND1A, DENND1B and DENND1C. Interacts with FCHO1 and DAB2. Interacts with ATAT1; this interaction is required for efficient alpha-tubulin acetylation by ATAT1. Interacts with KIAA1107. Together with AP2B1 and AP2M1, it interacts with ADAM10; this interaction facilitates ADAM10 endocytosis from the plasma membrane during long-term potentiation in hippocampal neurons. Interacts with CLN3 (via dileucine motif). Interacts with ABCB11; this interaction regulates cell membrane expression of ABCB11 through its internalization in a clathrin-dependent manner and its subsequent degradation. Interacts with Cacfd1. Interacts with DNAJC6. As to expression, expressed in the brain (at protein level).

It localises to the cell membrane. The protein localises to the membrane. Its subcellular location is the coated pit. In terms of biological role, component of the adaptor protein complex 2 (AP-2). Adaptor protein complexes function in protein transport via transport vesicles in different membrane traffic pathways. Adaptor protein complexes are vesicle coat components and appear to be involved in cargo selection and vesicle formation. AP-2 is involved in clathrin-dependent endocytosis in which cargo proteins are incorporated into vesicles surrounded by clathrin (clathrin-coated vesicles, CCVs) which are destined for fusion with the early endosome. The clathrin lattice serves as a mechanical scaffold but is itself unable to bind directly to membrane components. Clathrin-associated adaptor protein (AP) complexes which can bind directly to both the clathrin lattice and to the lipid and protein components of membranes are considered to be the major clathrin adaptors contributing the CCV formation. AP-2 also serves as a cargo receptor to selectively sort the membrane proteins involved in receptor-mediated endocytosis. AP-2 seems to play a role in the recycling of synaptic vesicle membranes from the presynaptic surface. AP-2 recognizes Y-X-X-[FILMV] (Y-X-X-Phi) and [ED]-X-X-X-L-[LI] endocytosis signal motifs within the cytosolic tails of transmembrane cargo molecules. AP-2 may also play a role in maintaining normal post-endocytic trafficking through the ARF6-regulated, non-clathrin pathway. During long-term potentiation in hippocampal neurons, AP-2 is responsible for the endocytosis of ADAM10. The AP-2 alpha subunit binds polyphosphoinositide-containing lipids, positioning AP-2 on the membrane. The AP-2 alpha subunit acts via its C-terminal appendage domain as a scaffolding platform for endocytic accessory proteins. The AP-2 alpha and AP-2 sigma subunits are thought to contribute to the recognition of the [ED]-X-X-X-L-[LI] motif. The sequence is that of AP-2 complex subunit alpha-2 (AP2A2) from Homo sapiens (Human).